Here is an 88-residue protein sequence, read N- to C-terminus: Small ribosomal subunit protein bS20 (88 aa).

The protein belongs to the bacterial ribosomal protein bS20 family.

In terms of biological role, binds directly to 16S ribosomal RNA. This Bradyrhizobium sp. (strain BTAi1 / ATCC BAA-1182) protein is Small ribosomal subunit protein bS20.